A 226-amino-acid polypeptide reads, in one-letter code: 2-C-methyl-D-erythritol 4-phosphate cytidylyltransferase (226 aa).

This sequence belongs to the IspD/TarI cytidylyltransferase family. IspD subfamily.

It carries out the reaction 2-C-methyl-D-erythritol 4-phosphate + CTP + H(+) = 4-CDP-2-C-methyl-D-erythritol + diphosphate. Its pathway is isoprenoid biosynthesis; isopentenyl diphosphate biosynthesis via DXP pathway; isopentenyl diphosphate from 1-deoxy-D-xylulose 5-phosphate: step 2/6. In terms of biological role, catalyzes the formation of 4-diphosphocytidyl-2-C-methyl-D-erythritol from CTP and 2-C-methyl-D-erythritol 4-phosphate (MEP). The protein is 2-C-methyl-D-erythritol 4-phosphate cytidylyltransferase of Rhodococcus opacus (strain B4).